The following is a 242-amino-acid chain: 1-(5-phosphoribosyl)-5-[(5-phosphoribosylamino)methylideneamino] imidazole-4-carboxamide isomerase (242 aa).

Asp-7 serves as the catalytic Proton acceptor. Catalysis depends on Asp-129, which acts as the Proton donor.

The protein belongs to the HisA/HisF family.

It is found in the cytoplasm. The enzyme catalyses 1-(5-phospho-beta-D-ribosyl)-5-[(5-phospho-beta-D-ribosylamino)methylideneamino]imidazole-4-carboxamide = 5-[(5-phospho-1-deoxy-D-ribulos-1-ylimino)methylamino]-1-(5-phospho-beta-D-ribosyl)imidazole-4-carboxamide. It functions in the pathway amino-acid biosynthesis; L-histidine biosynthesis; L-histidine from 5-phospho-alpha-D-ribose 1-diphosphate: step 4/9. The sequence is that of 1-(5-phosphoribosyl)-5-[(5-phosphoribosylamino)methylideneamino] imidazole-4-carboxamide isomerase from Pseudoalteromonas translucida (strain TAC 125).